A 455-amino-acid chain; its full sequence is Membrane-bound lytic murein transglycosylase F (455 aa).

Residues 1–21 (MPKSAVSLFAILLLAASVITA) form the signal peptide. Positions 22–264 (CSPQTRPDAM…HIKEQHFGHV (243 aa)) are non-LT domain. The tract at residues 265-455 (KQFNYVTTSL…LKYLDEQGRL (191 aa)) is LT domain. Residue E309 is part of the active site.

This sequence in the N-terminal section; belongs to the bacterial solute-binding protein 3 family. In the C-terminal section; belongs to the transglycosylase Slt family.

The protein localises to the cell outer membrane. It carries out the reaction Exolytic cleavage of the (1-&gt;4)-beta-glycosidic linkage between N-acetylmuramic acid (MurNAc) and N-acetylglucosamine (GlcNAc) residues in peptidoglycan, from either the reducing or the non-reducing ends of the peptidoglycan chains, with concomitant formation of a 1,6-anhydrobond in the MurNAc residue.. Functionally, murein-degrading enzyme that degrades murein glycan strands and insoluble, high-molecular weight murein sacculi, with the concomitant formation of a 1,6-anhydromuramoyl product. Lytic transglycosylases (LTs) play an integral role in the metabolism of the peptidoglycan (PG) sacculus. Their lytic action creates space within the PG sacculus to allow for its expansion as well as for the insertion of various structures such as secretion systems and flagella. In Idiomarina loihiensis (strain ATCC BAA-735 / DSM 15497 / L2-TR), this protein is Membrane-bound lytic murein transglycosylase F.